A 244-amino-acid polypeptide reads, in one-letter code: Adenosylcobinamide-GDP ribazoletransferase (244 aa).

The next 5 helical transmembrane spans lie at 31-51 (LLCYPLVGLLFGLLLWLASHL), 55-75 (APAPLHAALLLTLWVLLSGAL), 109-129 (IAVVTLVLVLLLKFCALWVLV), 133-153 (AGALLVLAPVVGRAAMLGLFL), and 188-208 (LLLGGWSAIWPMALALGVFLW).

Belongs to the CobS family. The cofactor is Mg(2+).

The protein resides in the cell inner membrane. It catalyses the reaction alpha-ribazole + adenosylcob(III)inamide-GDP = adenosylcob(III)alamin + GMP + H(+). The catalysed reaction is alpha-ribazole 5'-phosphate + adenosylcob(III)inamide-GDP = adenosylcob(III)alamin 5'-phosphate + GMP + H(+). It functions in the pathway cofactor biosynthesis; adenosylcobalamin biosynthesis; adenosylcobalamin from cob(II)yrinate a,c-diamide: step 7/7. Functionally, joins adenosylcobinamide-GDP and alpha-ribazole to generate adenosylcobalamin (Ado-cobalamin). Also synthesizes adenosylcobalamin 5'-phosphate from adenosylcobinamide-GDP and alpha-ribazole 5'-phosphate. The protein is Adenosylcobinamide-GDP ribazoletransferase of Pseudomonas putida (strain W619).